Here is a 386-residue protein sequence, read N- to C-terminus: HORMA domain-containing protein 1 (386 aa).

The region spanning 24–224 (TQSLILVKRL…TPFHVLKVKV (201 aa)) is the HORMA domain. 2 disordered regions span residues 237 to 274 (SIFKKQASKQPQTDEEKPDLSINDDLAQDNNGDRKRDD) and 289 to 386 (EDGN…TPLN). Polar residues predominate over residues 289–313 (EDGNLQSDDSQNSALADSQEKTSQA). Over residues 329 to 343 (QKPDLELKNQKESAR) the composition is skewed to basic and acidic residues.

It is found in the nucleus. The protein localises to the chromosome. In terms of biological role, plays a key role in meiotic progression by ensuring that sufficient numbers of processed DNA double-strand breaks (DSBs) are available for successful homology search, promoting synaptonemal-complex formation independently and playing key role in the male mid-pachytene checkpoint and the female meiotic prophase checkpoint. The polypeptide is HORMA domain-containing protein 1 (hormad1) (Xenopus laevis (African clawed frog)).